The primary structure comprises 453 residues: Glutamyl-tRNA(Gln) amidotransferase subunit A (453 aa).

Residues K56 and S131 each act as charge relay system in the active site. Residue S155 is the Acyl-ester intermediate of the active site.

This sequence belongs to the amidase family. GatA subfamily. In terms of assembly, heterotrimer of A, B and C subunits.

It carries out the reaction L-glutamyl-tRNA(Gln) + L-glutamine + ATP + H2O = L-glutaminyl-tRNA(Gln) + L-glutamate + ADP + phosphate + H(+). Allows the formation of correctly charged Gln-tRNA(Gln) through the transamidation of misacylated Glu-tRNA(Gln) in organisms which lack glutaminyl-tRNA synthetase. The reaction takes place in the presence of glutamine and ATP through an activated gamma-phospho-Glu-tRNA(Gln). The chain is Glutamyl-tRNA(Gln) amidotransferase subunit A from Campylobacter jejuni (strain RM1221).